A 201-amino-acid polypeptide reads, in one-letter code: Sorting nexin-10 (201 aa).

The required for interaction with ATP6V1D stretch occupies residues 8–125 (EEFVSVWVRD…SLHLFLQSHL (118 aa)). A PX domain is found at 10-127 (FVSVWVRDPR…HLFLQSHLNS (118 aa)). Positions 53, 79, and 94 each coordinate a 1,2-diacyl-sn-glycero-3-phospho-(1D-myo-inositol-3-phosphate). Residues 155–201 (RFPEEEEEGKKDADVEYDSESSSSGLGHSSDDSSSHGCKTSPALQES) form a disordered region.

Belongs to the sorting nexin family. In terms of assembly, interacts with ATP6V1D; may play a role in ciliogenesis. In terms of tissue distribution, expressed in femur, calvariae and teeth.

The protein localises to the cytoplasm. The protein resides in the endosome membrane. Its subcellular location is the cytoskeleton. It is found in the microtubule organizing center. It localises to the centrosome. Functionally, probable phosphoinositide-binding protein involved in protein sorting and membrane trafficking in endosomes. Plays a role in cilium biogenesis through regulation of the transport and the localization of proteins to the cilium. Required for the localization to the cilium of V-ATPase subunit ATP6V1D and ATP6V0D1, and RAB8A. Involved in osteoclast differentiation and therefore bone resorption. The chain is Sorting nexin-10 (Snx10) from Mus musculus (Mouse).